We begin with the raw amino-acid sequence, 267 residues long: Putative metal-binding protein TM_0123 (267 aa).

The first 15 residues, 1-15 (MKKILLLLVLIVAVL), serve as a signal peptide directing secretion. 3 residues coordinate a divalent metal cation: histidine 53, histidine 107, and histidine 172.

Belongs to the bacterial solute-binding protein 9 family.

The protein resides in the periplasm. Functionally, part of an ATP-binding cassette (ABC) transport system involved in metal import. Binds a metal with high affinity and specificity and delivers it to the membrane permease for translocation into the cytoplasm. The sequence is that of Putative metal-binding protein TM_0123 from Thermotoga maritima (strain ATCC 43589 / DSM 3109 / JCM 10099 / NBRC 100826 / MSB8).